Reading from the N-terminus, the 236-residue chain is Small ribosomal subunit protein uS2c (236 aa).

It belongs to the universal ribosomal protein uS2 family.

Its subcellular location is the plastid. It localises to the chloroplast. This Saccharum hybrid (Sugarcane) protein is Small ribosomal subunit protein uS2c (rps2).